Reading from the N-terminus, the 200-residue chain is Inner membrane-spanning protein YciB (200 aa).

6 consecutive transmembrane segments (helical) span residues 1–21, 37–57, 66–86, 103–123, 136–156, and 167–187; these read MPPL…FFAN, IGAP…IALA, LPIM…LTLW, LFGG…GYVF, KLTL…EIVW, and FKVW…MPLI.

This sequence belongs to the YciB family.

The protein resides in the cell inner membrane. Its function is as follows. Plays a role in cell envelope biogenesis, maintenance of cell envelope integrity and membrane homeostasis. This chain is Inner membrane-spanning protein YciB, found in Brucella suis biovar 1 (strain 1330).